The primary structure comprises 422 residues: SH2 domain-containing protein 4A (422 aa).

Phosphoserine is present on residues serine 117 and serine 123. Disordered regions lie at residues 141–190 (PQNV…EDEK) and 202–282 (SEWQ…VIRT). Composition is skewed to basic and acidic residues over residues 163 to 190 (TKKDDKAQTKDLTKKKDSEELKQTEDEK) and 212 to 231 (KAADEKRRSLAKQAREDYKR). A Phosphoserine modification is found at serine 233. Residues 316-408 (WFHGILTLKK…LGKELLLFPC (93 aa)) enclose the SH2 domain.

In terms of assembly, interacts with ESR1.

The protein localises to the cytoplasm. Its function is as follows. Inhibits estrogen-induced cell proliferation by competing with PLCG for binding to ESR1, blocking the effect of estrogen on PLCG and repressing estrogen-induced proliferation. May play a role in T-cell development and function. The sequence is that of SH2 domain-containing protein 4A (Sh2d4a) from Rattus norvegicus (Rat).